The sequence spans 129 residues: Small ribosomal subunit protein uS11 (129 aa).

This sequence belongs to the universal ribosomal protein uS11 family. In terms of assembly, part of the 30S ribosomal subunit. Interacts with proteins S7 and S18. Binds to IF-3.

Functionally, located on the platform of the 30S subunit, it bridges several disparate RNA helices of the 16S rRNA. Forms part of the Shine-Dalgarno cleft in the 70S ribosome. This Lacticaseibacillus casei (strain BL23) (Lactobacillus casei) protein is Small ribosomal subunit protein uS11.